The following is a 63-amino-acid chain: MSKKAPAQKKLPRAAAWYEIDMQKGVFRFKNKLCPKCGSVMAFHREPVPRWHCGKCGFTQFQR.

Residues C34, C37, C53, and C56 each contribute to the Zn(2+) site. A C4-type zinc finger spans residues 34–56; the sequence is CPKCGSVMAFHREPVPRWHCGKC.

It belongs to the eukaryotic ribosomal protein eS31 family. In terms of assembly, part of the 30S ribosomal subunit. It depends on Zn(2+) as a cofactor.

The polypeptide is Small ribosomal subunit protein eS31 (Pyrobaculum neutrophilum (strain DSM 2338 / JCM 9278 / NBRC 100436 / V24Sta) (Thermoproteus neutrophilus)).